The sequence spans 293 residues: Phosphatidylserine decarboxylase proenzyme (293 aa).

Catalysis depends on charge relay system; for autoendoproteolytic cleavage activity residues D90, H147, and S254. S254 serves as the catalytic Schiff-base intermediate with substrate; via pyruvic acid; for decarboxylase activity. Residue S254 is modified to Pyruvic acid (Ser); by autocatalysis.

Belongs to the phosphatidylserine decarboxylase family. PSD-B subfamily. Prokaryotic type I sub-subfamily. In terms of assembly, heterodimer of a large membrane-associated beta subunit and a small pyruvoyl-containing alpha subunit. The cofactor is pyruvate. In terms of processing, is synthesized initially as an inactive proenzyme. Formation of the active enzyme involves a self-maturation process in which the active site pyruvoyl group is generated from an internal serine residue via an autocatalytic post-translational modification. Two non-identical subunits are generated from the proenzyme in this reaction, and the pyruvate is formed at the N-terminus of the alpha chain, which is derived from the carboxyl end of the proenzyme. The autoendoproteolytic cleavage occurs by a canonical serine protease mechanism, in which the side chain hydroxyl group of the serine supplies its oxygen atom to form the C-terminus of the beta chain, while the remainder of the serine residue undergoes an oxidative deamination to produce ammonia and the pyruvoyl prosthetic group on the alpha chain. During this reaction, the Ser that is part of the protease active site of the proenzyme becomes the pyruvoyl prosthetic group, which constitutes an essential element of the active site of the mature decarboxylase.

It localises to the cell membrane. It carries out the reaction a 1,2-diacyl-sn-glycero-3-phospho-L-serine + H(+) = a 1,2-diacyl-sn-glycero-3-phosphoethanolamine + CO2. Its pathway is phospholipid metabolism; phosphatidylethanolamine biosynthesis; phosphatidylethanolamine from CDP-diacylglycerol: step 2/2. Catalyzes the formation of phosphatidylethanolamine (PtdEtn) from phosphatidylserine (PtdSer). This Yersinia pseudotuberculosis serotype O:1b (strain IP 31758) protein is Phosphatidylserine decarboxylase proenzyme.